Here is a 117-residue protein sequence, read N- to C-terminus: MAAAGFYPPRLLPQVLISTGPGFYEDEHHRLWMVAKLETCSHSPYCNKIETCVTVHLWQMTRYPQEPAPYNPMNYNFLPMTWRLASMNTYRGTDAMHWRLLNHSQVGDTVQLILMLE.

Belongs to the TCL1 family.

The protein is Protein TCL1B2 (Tcl1b2) of Mus musculus (Mouse).